The primary structure comprises 212 residues: Methylthioribulose-1-phosphate dehydratase (212 aa).

The Zn(2+) site is built by His-97 and His-99.

Belongs to the aldolase class II family. MtnB subfamily. As to quaternary structure, homotetramer. It depends on Zn(2+) as a cofactor.

The enzyme catalyses 5-(methylsulfanyl)-D-ribulose 1-phosphate = 5-methylsulfanyl-2,3-dioxopentyl phosphate + H2O. The protein operates within amino-acid biosynthesis; L-methionine biosynthesis via salvage pathway; L-methionine from S-methyl-5-thio-alpha-D-ribose 1-phosphate: step 2/6. Functionally, catalyzes the dehydration of methylthioribulose-1-phosphate (MTRu-1-P) into 2,3-diketo-5-methylthiopentyl-1-phosphate (DK-MTP-1-P). The polypeptide is Methylthioribulose-1-phosphate dehydratase (Bacillus cereus (strain G9842)).